A 276-amino-acid polypeptide reads, in one-letter code: Large ribosomal subunit protein uL2c (276 aa).

Residues 225–276 are disordered; sequence AMNPVDHPHGGGEGRTPIGRKKPVTPWGYSALGKKSRKRNRYSDASILRRRE.

Belongs to the universal ribosomal protein uL2 family. As to quaternary structure, part of the 50S ribosomal subunit.

It localises to the plastid. The protein resides in the chloroplast. This Pinus thunbergii (Japanese black pine) protein is Large ribosomal subunit protein uL2c (rpl2).